Here is a 765-residue protein sequence, read N- to C-terminus: Ankyrin repeat and protein kinase domain-containing protein 1 (765 aa).

The region spanning Glu-22–Leu-289 is the Protein kinase domain. ATP contacts are provided by residues Val-28–Val-36 and Lys-51. Asp-145 (proton acceptor) is an active-site residue. 12 ANK repeats span residues Asn-361 to Cys-390, Ser-394 to Arg-423, Asp-427 to Ala-456, Glu-460 to Leu-489, Glu-493 to Ala-522, Asn-526 to Ala-555, Ser-559 to Leu-588, Gln-592 to Ala-621, Val-625 to Ala-654, Ser-658 to Ala-687, Val-691 to Val-720, and Val-724 to Thr-753.

The protein belongs to the protein kinase superfamily. TKL Ser/Thr protein kinase family. In terms of tissue distribution, highly expressed in brain and weakly expressed in placenta and spinal cord.

The catalysed reaction is L-seryl-[protein] + ATP = O-phospho-L-seryl-[protein] + ADP + H(+). It carries out the reaction L-threonyl-[protein] + ATP = O-phospho-L-threonyl-[protein] + ADP + H(+). In Homo sapiens (Human), this protein is Ankyrin repeat and protein kinase domain-containing protein 1 (ANKK1).